A 423-amino-acid chain; its full sequence is MAAPRVFPLSCAVQQYAWGKMGSNSEVARLLASSDPLAQIAEDKPYAELWMGTHPRGDAKILDNRISQKTLSQWIAENQDSLGSKVKDTFNGNLPFLFKVLSVETPLSIQAHPNKELAEKLHLQAPQHYPDANHKPEMAIALTPFQGLCGFRPVEEIVTFLKKVPEFQFLIGDEAATHLKQTMSHDSQAVASSLQSCFSHLMKSEKKVVVEQLNLLVKRISQQAAAGNNMEDIFGELLLQLHQQYPGDIGCFAIYFLNLLTLKPGEAMFLEANVPHAYLKGDCVECMACSDNTVRAGLTPKFIDVPTLCEMLSYTPSSSKDRLFLPTRSQEDPYLSIYDPPVPDFTIMKTEVPGSVTEYKVLALDSASILLMVQGTVIASTPTTQTPIPLQRGGVLFIGANESVSLKLTEPKDLLIFRACCLL.

Position 2 is an N-acetylalanine (Ala-2). Phosphoserine is present on residues Ser-102 and Ser-108. Zn(2+)-binding residues include Gln-110, His-112, Glu-137, and His-276. Arg-295 is a catalytic residue.

The protein belongs to the mannose-6-phosphate isomerase type 1 family. Zn(2+) serves as cofactor. Expressed in all tissues, but more abundant in heart, brain and skeletal muscle.

It is found in the cytoplasm. It catalyses the reaction D-mannose 6-phosphate = D-fructose 6-phosphate. The protein operates within nucleotide-sugar biosynthesis; GDP-alpha-D-mannose biosynthesis; alpha-D-mannose 1-phosphate from D-fructose 6-phosphate: step 1/2. In terms of biological role, isomerase that catalyzes the interconversion of fructose-6-P and mannose-6-P and has a critical role in the supply of D-mannose derivatives required for many eukaryotic glycosylation reactions. The protein is Mannose-6-phosphate isomerase of Homo sapiens (Human).